The following is a 546-amino-acid chain: Germacrene-D synthase (546 aa).

Residues Asp-303, Asp-307, Asp-448, and Glu-456 each contribute to the Mg(2+) site. The DDXXD motif signature appears at 303–307 (DDIYD).

This sequence belongs to the terpene synthase family. The cofactor is Mg(2+). Mn(2+) is required as a cofactor.

It carries out the reaction (2E,6E)-farnesyl diphosphate = (-)-germacrene D + diphosphate. The protein operates within secondary metabolite biosynthesis; terpenoid biosynthesis. Sesquiterpene synthase that catalyzes the formation of germacrene D from trans,trans-farnesyl diphosphate (FPP). The chain is Germacrene-D synthase (GDS) from Ocimum basilicum (Sweet basil).